The sequence spans 314 residues: (-)-isopiperitenone reductase (314 aa).

Residue Val-10–Ile-33 coordinates NADP(+). A substrate-binding site is contributed by Ser-182.

Belongs to the short-chain dehydrogenases/reductases (SDR) family.

The protein resides in the cytoplasm. The enzyme catalyses (2R,5R)-isopulegone + NADP(+) = (6R)-isopiperitenone + NADPH + H(+). The protein operates within secondary metabolite biosynthesis; terpenoid biosynthesis. In terms of biological role, monoterpene synthase that catalyzes the specific reduction of the 1(2)-double bond of (-)-isopiperitenone to produce (+)-cis-isopulegone. Does not catalyze the reverse reaction. Unable to reduce (+)-pulegone, (+)-cis-isopulegone, (-)-menthone or the 1,2-double bond of (-)-carvone. Able to utilize NADH with 20% the efficiency of NADPH. This is (-)-isopiperitenone reductase from Mentha piperita (Peppermint).